Consider the following 472-residue polypeptide: 3-isopropylmalate dehydratase large subunit (472 aa).

The segment at 61-80 (TPDHNVPTTQKERASGVEGI) is disordered. [4Fe-4S] cluster is bound by residues Cys-353, Cys-414, and Cys-417.

The protein belongs to the aconitase/IPM isomerase family. LeuC type 1 subfamily. As to quaternary structure, heterodimer of LeuC and LeuD. [4Fe-4S] cluster serves as cofactor.

It catalyses the reaction (2R,3S)-3-isopropylmalate = (2S)-2-isopropylmalate. The protein operates within amino-acid biosynthesis; L-leucine biosynthesis; L-leucine from 3-methyl-2-oxobutanoate: step 2/4. In terms of biological role, catalyzes the isomerization between 2-isopropylmalate and 3-isopropylmalate, via the formation of 2-isopropylmaleate. This chain is 3-isopropylmalate dehydratase large subunit, found in Saccharophagus degradans (strain 2-40 / ATCC 43961 / DSM 17024).